Consider the following 346-residue polypeptide: Glycerol-1-phosphate dehydrogenase [NAD(P)+] (346 aa).

Residues 93-97 and 115-118 contribute to the NAD(+) site; these read GSIID and TTAS. Asp120 serves as a coordination point for substrate. Ser124 is an NAD(+) binding site. Asp167 contacts substrate. Residues Asp167 and His247 each contribute to the Zn(2+) site. Residue His251 coordinates substrate. Position 263 (His263) interacts with Zn(2+).

It belongs to the glycerol-1-phosphate dehydrogenase family. Zn(2+) serves as cofactor.

It localises to the cytoplasm. The catalysed reaction is sn-glycerol 1-phosphate + NAD(+) = dihydroxyacetone phosphate + NADH + H(+). It carries out the reaction sn-glycerol 1-phosphate + NADP(+) = dihydroxyacetone phosphate + NADPH + H(+). The protein operates within membrane lipid metabolism; glycerophospholipid metabolism. Functionally, catalyzes the NAD(P)H-dependent reduction of dihydroxyacetonephosphate (DHAP or glycerone phosphate) to glycerol 1-phosphate (G1P). The G1P thus generated is used as the glycerophosphate backbone of phospholipids in the cellular membranes of Archaea. In Pyrococcus horikoshii (strain ATCC 700860 / DSM 12428 / JCM 9974 / NBRC 100139 / OT-3), this protein is Glycerol-1-phosphate dehydrogenase [NAD(P)+].